The sequence spans 622 residues: MGFLVSKGNLLLLLCASIFPAFGHVETRAHAEERLLKKLFSGYNKWSRPVANISDVVLVRFGLSIAQLIDVDEKNQMMTTNVWVKQEWHDYKLRWDPQEYENVTSIRIPSELIWRPDIVLYNNADGDFAVTHLTKAHLFYDGRIKWMPPAIYKSSCSIDVTFFPFDQQNCKMKFGSWTYDKAKIDLVSMHSHVDQLDYWESGEWVIINAVGNYNSKKYECCTEIYPDITYSFIIRRLPLFYTINLIIPCLLISCLTVLVFYLPSECGEKITLCISVLLSLTVFLLLITEIIPSTSLVIPLIGEYLLFTMIFVTLSIIITVFVLNVHHRSPRTHTMPDWVRRVFLDIVPRLLFMKRPSTVKDNCKKLIESMHKLTNSPRLWSETDMEPNFTTSSSPSPQSNEPSPTSSFCAHLEEPAKPMCKSPSGQYSMLHPEPPQVTCSSPKPSCHPLSDTQTTSISKGRSLSVQQMYSPNKTEEGSIRCRSRSIQYCYLQEDSSQTNGHSSASPASQRCHLNEEQPQHKPHQCKCKCRKGEAAGTPTQGSKSHSNKGEHLVLMSPALKLAVEGVHYIADHLRAEDADFSVKEDWKYVAMVIDRIFLWMFIIVCLLGTVGLFLPPWLAGMI.

Positions 1 to 23 are cleaved as a signal peptide; it reads MGFLVSKGNLLLLLCASIFPAFG. Residues 24–237 lie on the Extracellular side of the membrane; sequence HVETRAHAEE…ITYSFIIRRL (214 aa). Asparagine 52 carries an N-linked (GlcNAc...) asparagine glycan. 2 residues coordinate Ca(2+): valine 71 and glutamate 73. Residue asparagine 102 is glycosylated (N-linked (GlcNAc...) asparagine). Intrachain disulfides connect cysteine 156-cysteine 170 and cysteine 220-cysteine 221. A helical membrane pass occupies residues 238–262; it reads PLFYTINLIIPCLLISCLTVLVFYL. Cysteine 266 carries the S-palmitoyl cysteine lipid modification. 2 helical membrane passes run 270 to 288 and 304 to 325; these read ITLC…LLIT and YLLF…VLNV. The Cytoplasmic portion of the chain corresponds to 326–595; it reads HHRSPRTHTM…WKYVAMVIDR (270 aa). Disordered stretches follow at residues 380–477 and 497–516; these read WSET…TEEG and QTNG…LNEE. The segment covering 390 to 407 has biased composition (low complexity); that stretch reads TTSSSPSPQSNEPSPTSS. Composition is skewed to polar residues over residues 450–472 and 497–508; these read SDTQ…YSPN and QTNGHSSASPAS. Residues 596-614 form a helical membrane-spanning segment; that stretch reads IFLWMFIIVCLLGTVGLFL.

This sequence belongs to the ligand-gated ion channel (TC 1.A.9) family. Acetylcholine receptor (TC 1.A.9.1) subfamily. Alpha-4/CHRNA4 sub-subfamily. As to quaternary structure, neuronal AChR is composed of two different types of subunits: alpha and beta. CHRNA4 forms heteropentameric neuronal acetylcholine receptors with CHRNB2 and CHRNB4, as well as CHRNA5 and CHRNB3 as accesory subunits. Found in two major stoichiometric forms, LS (low agonist sensitivity): (CHRNA4)3:(CHRNB2)2 and HS (high agonist sensitivity): (CHRNA4)2:(CHRNB2)3, the two stoichiometric forms differ in their unitary conductance, calcium permeability, ACh sensitivity and potentiation by divalent cation. Cells produce predominantly an (CHRNA4)3:(CHRNB2)2 nAChR. The (CHRNA4)2:(CHRNB2)3 expression is selectively up-regulated by nicotine and has lower single channel conductance and calcium permeability. In the striatum, also forms CHRNA4:CHRNA6:CHRNB2 complexes. Also found in the stoichiometric form: (CHRNA4:CHRNB2)2:CHRNB3.

It localises to the synaptic cell membrane. It is found in the cell membrane. The catalysed reaction is Ca(2+)(in) = Ca(2+)(out). It carries out the reaction K(+)(in) = K(+)(out). It catalyses the reaction Na(+)(in) = Na(+)(out). Its activity is regulated as follows. Activated by a myriad of ligands such as acetylcholine, cytisine, nicotine, choline and epibatidine. Channel potentiation by calcium is stoichiometry-selective, CHRNA4:CHRNB2 nACh receptor is achieved by calcium association with topographically distinct sites framed by anionic residues within the CHRNA4 subunit and between the CHRNA4 and CHRNB2 subunits. nAChR activity is inhibited by the antagonist alpha-conotoxins BuIA, PnIA, GID and MII, small disulfide-constrained peptides from cone snails. Component of neuronal acetylcholine receptors (nAChRs) that function as pentameric, ligand-gated cation channels with high calcium permeability among other activities. nAChRs are excitatory neurotrasnmitter receptors formed by a collection of nAChR subunits known to mediate synaptic transmission in the nervous system and the neuromuscular junction. Each nAchR subunit confers differential attributes to channel properties, including activation, deactivation and desensitization kinetics, pH sensitivity, cation permeability, and binding to allosteric modulators. CHRNA4 forms heteropentameric neuronal acetylcholine receptors with CHRNB2 and CHRNB4, as well as CHRNA5 and CHRNB3 as accesory subunits. Is the most abundant nAChR subtype expressed in the central nervous system. Found in two major stoichiometric forms,(CHRNA4)3:(CHRNB2)2 and (CHRNA4)2:(CHRNB2)3, the two stoichiometric forms differ in their unitary conductance, calcium permeability, ACh sensitivity and potentiation by divalent cation. Involved in the modulation of calcium-dependent signaling pathways, influences the release of neurotransmitters, including dopamine, glutamate and GABA. In Gallus gallus (Chicken), this protein is Neuronal acetylcholine receptor subunit alpha-4 (CHRNA4).